The following is a 525-amino-acid chain: Glutamate--cysteine ligase (525 aa).

Belongs to the glutamate--cysteine ligase type 1 family. Type 1 subfamily.

The catalysed reaction is L-cysteine + L-glutamate + ATP = gamma-L-glutamyl-L-cysteine + ADP + phosphate + H(+). It participates in sulfur metabolism; glutathione biosynthesis; glutathione from L-cysteine and L-glutamate: step 1/2. In Vibrio vulnificus (strain CMCP6), this protein is Glutamate--cysteine ligase.